The chain runs to 227 residues: PKHD-type hydroxylase azo0608 (227 aa).

In terms of domain architecture, Fe2OG dioxygenase spans 78-178; the sequence is RVLTPFFNRY…RVACFMFMQS (101 aa). Fe cation contacts are provided by H97, D99, and H159. Position 169 (R169) interacts with 2-oxoglutarate.

Fe(2+) serves as cofactor. L-ascorbate is required as a cofactor.

The polypeptide is PKHD-type hydroxylase azo0608 (Azoarcus sp. (strain BH72)).